The following is a 662-amino-acid chain: Glycine--tRNA ligase beta subunit (662 aa).

This sequence belongs to the class-II aminoacyl-tRNA synthetase family. In terms of assembly, tetramer of two alpha and two beta subunits.

It localises to the cytoplasm. The enzyme catalyses tRNA(Gly) + glycine + ATP = glycyl-tRNA(Gly) + AMP + diphosphate. This chain is Glycine--tRNA ligase beta subunit, found in Rickettsia akari (strain Hartford).